Reading from the N-terminus, the 277-residue chain is Probable ABC transporter permease protein y4oR (277 aa).

7 helical membrane-spanning segments follow: residues 15 to 35 (LWTLFWCVLAFVYLFPYTWMV), 79 to 99 (VVTIVSVVLVIAVSAPAAYAL), 109 to 129 (LLVAILVARIIPGIAIGVPVY), 140 to 160 (TYQALIIINVAVNIPFAIWLM), 189 to 209 (IMMPLVLGGMLATAVFVFIAV), 213 to 233 (FLFALILTTSVSPTAPLAMLG), and 242 to 262 (WDAVGAAAFLVSTPVIAFAFI). In terms of domain architecture, ABC transmembrane type-1 spans 74–263 (IINSAVVTIV…TPVIAFAFIM (190 aa)).

The protein belongs to the binding-protein-dependent transport system permease family. MalFG subfamily.

It localises to the cell inner membrane. In terms of biological role, probably part of the binding-protein-dependent transport system y4oPQRS. This system probably transports a sugar-like molecule. Probably responsible for the translocation of the substrate across the membrane. This is Probable ABC transporter permease protein y4oR from Sinorhizobium fredii (strain NBRC 101917 / NGR234).